A 207-amino-acid chain; its full sequence is Large ribosomal subunit protein uL4 (207 aa).

Positions 50–75 are disordered; sequence KTKTVSEVSGTTKKPFKQKGTGNARQ.

This sequence belongs to the universal ribosomal protein uL4 family. As to quaternary structure, part of the 50S ribosomal subunit.

One of the primary rRNA binding proteins, this protein initially binds near the 5'-end of the 23S rRNA. It is important during the early stages of 50S assembly. It makes multiple contacts with different domains of the 23S rRNA in the assembled 50S subunit and ribosome. Its function is as follows. Forms part of the polypeptide exit tunnel. The polypeptide is Large ribosomal subunit protein uL4 (Rickettsia akari (strain Hartford)).